An 89-amino-acid chain; its full sequence is DNA/RNA-binding protein Alba 2 (89 aa).

Belongs to the histone-like Alba family. As to quaternary structure, forms homodimers and homotetramers. Interacts with Alba 1.

The protein resides in the cytoplasm. It is found in the chromosome. Binds double-stranded DNA tightly but without sequence specificity. Involved in DNA compaction. This chain is DNA/RNA-binding protein Alba 2, found in Archaeoglobus fulgidus (strain ATCC 49558 / DSM 4304 / JCM 9628 / NBRC 100126 / VC-16).